We begin with the raw amino-acid sequence, 149 residues long: MSSTILVIHGPNLNLLGKREPEVYGYLSLDDINQQLKTQAQASNISLETFQSNWEGAIVDRIHQAQIDGIQFILINPAALTHTSVAVRDALLGVAIPFIEVHLSNVHAREAFRHHSYLSDKAVGVICGFGAKGYHFALDYAIQKIQPST.

Tyrosine 24 acts as the Proton acceptor in catalysis. Residues asparagine 76, histidine 82, and aspartate 89 each contribute to the substrate site. Residue histidine 102 is the Proton donor of the active site. Substrate is bound by residues leucine 103–serine 104 and arginine 113.

This sequence belongs to the type-II 3-dehydroquinase family. As to quaternary structure, homododecamer.

It catalyses the reaction 3-dehydroquinate = 3-dehydroshikimate + H2O. Its pathway is metabolic intermediate biosynthesis; chorismate biosynthesis; chorismate from D-erythrose 4-phosphate and phosphoenolpyruvate: step 3/7. Its function is as follows. Catalyzes a trans-dehydration via an enolate intermediate. This Acinetobacter baylyi (strain ATCC 33305 / BD413 / ADP1) protein is 3-dehydroquinate dehydratase.